The primary structure comprises 360 residues: Protein Wnt-2 (360 aa).

The signal sequence occupies residues 1–25 (MNAPLCGIWLWLPLLLTWLTPEVSS). 11 disulfides stabilise this stretch: cysteine 76/cysteine 87, cysteine 127/cysteine 135, cysteine 137/cysteine 157, cysteine 206/cysteine 220, cysteine 208/cysteine 215, cysteine 278/cysteine 309, cysteine 294/cysteine 304, cysteine 308/cysteine 348, cysteine 324/cysteine 339, cysteine 326/cysteine 336, and cysteine 331/cysteine 332. Serine 212 carries the O-palmitoleoyl serine; by PORCN lipid modification. An N-linked (GlcNAc...) asparagine glycan is attached at asparagine 295.

It belongs to the Wnt family. Post-translationally, palmitoleoylation is required for efficient binding to frizzled receptors. Depalmitoleoylation leads to Wnt signaling pathway inhibition.

It localises to the secreted. Its subcellular location is the extracellular space. The protein resides in the extracellular matrix. Functionally, ligand for members of the frizzled family of seven transmembrane receptors. Functions in the canonical Wnt signaling pathway that results in activation of transcription factors of the TCF/LEF family. Functions as a upstream regulator of FGF10 expression. Plays an important role in embryonic lung development. May contribute to embryonic brain development by regulating the proliferation of dopaminergic precursors and neurons. The polypeptide is Protein Wnt-2 (WNT2) (Otolemur garnettii (Small-eared galago)).